The following is a 388-amino-acid chain: Ribonuclease D (388 aa).

One can recognise a 3'-5' exonuclease domain in the interval 24-191; that stretch reads QYVSDEASLN…LYPQLADKLK (168 aa). Residues 230–310 form the HRDC domain; the sequence is TEHQLAYLKV…QTADLSNPPE (81 aa).

Belongs to the RNase D family. A divalent metal cation serves as cofactor.

Its subcellular location is the cytoplasm. The enzyme catalyses Exonucleolytic cleavage that removes extra residues from the 3'-terminus of tRNA to produce 5'-mononucleotides.. In terms of biological role, exonuclease involved in the 3' processing of various precursor tRNAs. Initiates hydrolysis at the 3'-terminus of an RNA molecule and releases 5'-mononucleotides. The sequence is that of Ribonuclease D from Shewanella sp. (strain ANA-3).